Reading from the N-terminus, the 424-residue chain is D-inositol 3-phosphate glycosyltransferase (424 aa).

Residue His-9 coordinates 1D-myo-inositol 3-phosphate. UDP-N-acetyl-alpha-D-glucosamine-binding positions include 15–16 (QP) and Gly-23. Residues 20–25 (DSGGMN), Lys-78, Tyr-110, Thr-134, and Arg-154 each bind 1D-myo-inositol 3-phosphate. UDP-N-acetyl-alpha-D-glucosamine is bound by residues Arg-231, Lys-236, and Arg-294. Residues Tyr-303, Arg-304, and Ala-306 each coordinate Mg(2+). UDP-N-acetyl-alpha-D-glucosamine-binding residues include Glu-316 and Glu-324. Thr-330 serves as a coordination point for Mg(2+).

Belongs to the glycosyltransferase group 1 family. MshA subfamily. Homodimer.

It catalyses the reaction 1D-myo-inositol 3-phosphate + UDP-N-acetyl-alpha-D-glucosamine = 1D-myo-inositol 2-acetamido-2-deoxy-alpha-D-glucopyranoside 3-phosphate + UDP + H(+). Catalyzes the transfer of a N-acetyl-glucosamine moiety to 1D-myo-inositol 3-phosphate to produce 1D-myo-inositol 2-acetamido-2-deoxy-glucopyranoside 3-phosphate in the mycothiol biosynthesis pathway. In Corynebacterium efficiens (strain DSM 44549 / YS-314 / AJ 12310 / JCM 11189 / NBRC 100395), this protein is D-inositol 3-phosphate glycosyltransferase.